Here is a 209-residue protein sequence, read N- to C-terminus: Small ribosomal subunit protein uS3 (209 aa).

The KH type-2 domain occupies 17–86; the sequence is IDEYLEKELR…NPQIEVEEIK (70 aa).

The protein belongs to the universal ribosomal protein uS3 family. As to quaternary structure, part of the 30S ribosomal subunit.

Binds the lower part of the 30S subunit head. In Thermococcus gammatolerans (strain DSM 15229 / JCM 11827 / EJ3), this protein is Small ribosomal subunit protein uS3.